Here is a 334-residue protein sequence, read N- to C-terminus: Glyceraldehyde-3-phosphate dehydrogenase (334 aa).

NAD(+) is bound by residues 12 to 13, Asp37, Arg81, and Ser123; that span reads RI. D-glyceraldehyde 3-phosphate is bound by residues 153–155 and Thr184; that span reads SCT. Cys154 acts as the Nucleophile in catalysis. NAD(+) is bound at residue Asn185. D-glyceraldehyde 3-phosphate is bound by residues Arg199, 212-213, and Arg235; that span reads TG. Asn314 lines the NAD(+) pocket.

Belongs to the glyceraldehyde-3-phosphate dehydrogenase family. As to quaternary structure, homotetramer.

It localises to the cytoplasm. The enzyme catalyses D-glyceraldehyde 3-phosphate + phosphate + NAD(+) = (2R)-3-phospho-glyceroyl phosphate + NADH + H(+). It participates in carbohydrate degradation; glycolysis; pyruvate from D-glyceraldehyde 3-phosphate: step 1/5. Catalyzes the oxidative phosphorylation of glyceraldehyde 3-phosphate (G3P) to 1,3-bisphosphoglycerate (BPG) using the cofactor NAD. The first reaction step involves the formation of a hemiacetal intermediate between G3P and a cysteine residue, and this hemiacetal intermediate is then oxidized to a thioester, with concomitant reduction of NAD to NADH. The reduced NADH is then exchanged with the second NAD, and the thioester is attacked by a nucleophilic inorganic phosphate to produce BPG. The protein is Glyceraldehyde-3-phosphate dehydrogenase (gap) of Pseudomonas aeruginosa (strain ATCC 15692 / DSM 22644 / CIP 104116 / JCM 14847 / LMG 12228 / 1C / PRS 101 / PAO1).